We begin with the raw amino-acid sequence, 196 residues long: Phosphoheptose isomerase (196 aa).

The 159-residue stretch at 38–196 (LIAGYRAGAR…VEHALFAPRQ (159 aa)) folds into the SIS domain. Residue 53-55 (NGG) participates in substrate binding. Positions 62 and 66 each coordinate Zn(2+). Residues Glu-66, 95-96 (ND), 121-123 (STS), Ser-126, and Gln-173 contribute to the substrate site. 2 residues coordinate Zn(2+): Gln-173 and His-181.

The protein belongs to the SIS family. GmhA subfamily. Zn(2+) is required as a cofactor.

It is found in the cytoplasm. The catalysed reaction is 2 D-sedoheptulose 7-phosphate = D-glycero-alpha-D-manno-heptose 7-phosphate + D-glycero-beta-D-manno-heptose 7-phosphate. It functions in the pathway carbohydrate biosynthesis; D-glycero-D-manno-heptose 7-phosphate biosynthesis; D-glycero-alpha-D-manno-heptose 7-phosphate and D-glycero-beta-D-manno-heptose 7-phosphate from sedoheptulose 7-phosphate: step 1/1. Functionally, catalyzes the isomerization of sedoheptulose 7-phosphate in D-glycero-D-manno-heptose 7-phosphate. This chain is Phosphoheptose isomerase, found in Mycobacterium bovis (strain ATCC BAA-935 / AF2122/97).